Consider the following 346-residue polypeptide: Holliday junction branch migration complex subunit RuvB (346 aa).

Residues 1–16 (MSDADRLITPEKRGED) show a composition bias toward basic and acidic residues. The segment at 1-23 (MSDADRLITPEKRGEDIDTTLRP) is disordered. The tract at residues 1–182 (MSDADRLITP…FGIPVRLAFY (182 aa)) is large ATPase domain (RuvB-L). ATP contacts are provided by residues Leu21, Arg22, Gly63, Lys66, Thr67, Thr68, 129–131 (EDF), Arg172, Tyr182, and Arg219. Residue Thr67 coordinates Mg(2+). The tract at residues 183 to 253 (TVDELELIVR…IADEALTRLL (71 aa)) is small ATPAse domain (RuvB-S). Residues 256–346 (NMGLDQLDMR…AQFRLTLEDD (91 aa)) form a head domain (RuvB-H) region. DNA-binding residues include Arg292, Arg311, and Arg316.

This sequence belongs to the RuvB family. Homohexamer. Forms an RuvA(8)-RuvB(12)-Holliday junction (HJ) complex. HJ DNA is sandwiched between 2 RuvA tetramers; dsDNA enters through RuvA and exits via RuvB. An RuvB hexamer assembles on each DNA strand where it exits the tetramer. Each RuvB hexamer is contacted by two RuvA subunits (via domain III) on 2 adjacent RuvB subunits; this complex drives branch migration. In the full resolvosome a probable DNA-RuvA(4)-RuvB(12)-RuvC(2) complex forms which resolves the HJ.

The protein localises to the cytoplasm. It carries out the reaction ATP + H2O = ADP + phosphate + H(+). The RuvA-RuvB-RuvC complex processes Holliday junction (HJ) DNA during genetic recombination and DNA repair, while the RuvA-RuvB complex plays an important role in the rescue of blocked DNA replication forks via replication fork reversal (RFR). RuvA specifically binds to HJ cruciform DNA, conferring on it an open structure. The RuvB hexamer acts as an ATP-dependent pump, pulling dsDNA into and through the RuvAB complex. RuvB forms 2 homohexamers on either side of HJ DNA bound by 1 or 2 RuvA tetramers; 4 subunits per hexamer contact DNA at a time. Coordinated motions by a converter formed by DNA-disengaged RuvB subunits stimulates ATP hydrolysis and nucleotide exchange. Immobilization of the converter enables RuvB to convert the ATP-contained energy into a lever motion, pulling 2 nucleotides of DNA out of the RuvA tetramer per ATP hydrolyzed, thus driving DNA branch migration. The RuvB motors rotate together with the DNA substrate, which together with the progressing nucleotide cycle form the mechanistic basis for DNA recombination by continuous HJ branch migration. Branch migration allows RuvC to scan DNA until it finds its consensus sequence, where it cleaves and resolves cruciform DNA. The polypeptide is Holliday junction branch migration complex subunit RuvB (Agrobacterium fabrum (strain C58 / ATCC 33970) (Agrobacterium tumefaciens (strain C58))).